The following is a 409-amino-acid chain: tRNA(Met) cytidine acetate ligase (409 aa).

ATP is bound by residues 7–20 (VVEY…HLYH), G102, N169, and R194.

The protein belongs to the TmcAL family.

The protein localises to the cytoplasm. It carries out the reaction cytidine(34) in elongator tRNA(Met) + acetate + ATP = N(4)-acetylcytidine(34) in elongator tRNA(Met) + AMP + diphosphate. Functionally, catalyzes the formation of N(4)-acetylcytidine (ac(4)C) at the wobble position of elongator tRNA(Met), using acetate and ATP as substrates. First activates an acetate ion to form acetyladenylate (Ac-AMP) and then transfers the acetyl group to tRNA to form ac(4)C34. This chain is tRNA(Met) cytidine acetate ligase, found in Clostridium botulinum (strain ATCC 19397 / Type A).